Here is a 207-residue protein sequence, read N- to C-terminus: NADH-ubiquinone oxidoreductase chain 6 (207 aa).

5 helical membrane-spanning segments follow: residues 1–21, 28–48, 50–70, 88–108, and 158–178; these read MDFL…LVIQ, SVLF…LLGL, FFAL…FLFV, YLPV…ILID, and FYFF…AIVL.

Belongs to the complex I subunit 6 family.

Its subcellular location is the mitochondrion membrane. It carries out the reaction a ubiquinone + NADH + 5 H(+)(in) = a ubiquinol + NAD(+) + 4 H(+)(out). Its function is as follows. Core subunit of the mitochondrial membrane respiratory chain NADH dehydrogenase (Complex I) that is believed to belong to the minimal assembly required for catalysis. Complex I functions in the transfer of electrons from NADH to the respiratory chain. The immediate electron acceptor for the enzyme is believed to be ubiquinone. The chain is NADH-ubiquinone oxidoreductase chain 6 (ND6) from Prototheca wickerhamii.